The following is a 130-amino-acid chain: Small ribosomal subunit protein uS8 (130 aa).

It belongs to the universal ribosomal protein uS8 family. As to quaternary structure, part of the 30S ribosomal subunit. Contacts proteins S5 and S12.

In terms of biological role, one of the primary rRNA binding proteins, it binds directly to 16S rRNA central domain where it helps coordinate assembly of the platform of the 30S subunit. The chain is Small ribosomal subunit protein uS8 from Photobacterium profundum (strain SS9).